The following is a 1082-amino-acid chain: Protein argonaute 1A (1082 aa).

Disordered regions lie at residues 17 to 148 (MMRK…ASQD) and 187 to 208 (GQSP…VRFP). The span at 29-38 (GESSGTQQAT) shows a compositional bias: polar residues. Gly residues predominate over residues 72–100 (GRGGGQHQGRGGRYQGRGGPTSHQPGGGP). The PAZ domain occupies 420–533 (PVIDFVAQLL…LPMEVCKIVE (114 aa)). One can recognise a Piwi domain in the interval 709–1030 (LLIAILPDNN…AAFRARFYME (322 aa)). Residues 1036 to 1065 (SGSMASGAHTRGGGPLPGARSTKPAGNVAV) are disordered.

The protein belongs to the argonaute family. Ago subfamily.

Functionally, probably involved in the RNA silencing pathway. May bind to short RNAs such as microRNAs (miRNAs) or short interfering RNAs (siRNAs), and represses the translation of mRNAs which are complementary to them. The polypeptide is Protein argonaute 1A (AGO1A) (Oryza sativa subsp. japonica (Rice)).